A 599-amino-acid polypeptide reads, in one-letter code: Beta-(1--&gt;2)glucan export ATP-binding/permease protein NdvA (599 aa).

The ABC transmembrane type-1 domain occupies Thr-21–Thr-301. The next 5 helical transmembrane spans lie at Ile-22 to Phe-42, Ile-55 to Phe-75, Met-156 to Val-176, Met-248 to Gly-268, and Ile-276 to Ile-296. Residues Ile-335–Ala-569 enclose the ABC transporter domain. Residue Gly-368–Thr-375 coordinates ATP.

This sequence belongs to the ABC transporter superfamily. Beta-(1--&gt;2)glucan exporter (TC 3.A.1.108.1) family. As to quaternary structure, homodimer.

It localises to the cell inner membrane. The enzyme catalyses [(1-&gt;2)-beta-D-glucosyl](n)(in) + ATP + H2O = [(1-&gt;2)-beta-D-glucosyl](n)(out) + ADP + phosphate + H(+). Involved in beta-(1--&gt;2)glucan export. Transmembrane domains (TMD) form a pore in the inner membrane and the ATP-binding domain (NBD) is responsible for energy generation. The chain is Beta-(1--&gt;2)glucan export ATP-binding/permease protein NdvA from Brucella suis biovar 1 (strain 1330).